A 124-amino-acid polypeptide reads, in one-letter code: Putative iron-sulfur cluster insertion protein ErpA (124 aa).

Positions 52, 116, and 118 each coordinate iron-sulfur cluster.

This sequence belongs to the HesB/IscA family. In terms of assembly, homodimer. Iron-sulfur cluster serves as cofactor.

In terms of biological role, required for insertion of 4Fe-4S clusters. The polypeptide is Putative iron-sulfur cluster insertion protein ErpA (Ralstonia pickettii (strain 12J)).